A 428-amino-acid polypeptide reads, in one-letter code: Glutamate-1-semialdehyde 2,1-aminomutase 1 (428 aa).

The residue at position 267 (Lys267) is an N6-(pyridoxal phosphate)lysine.

This sequence belongs to the class-III pyridoxal-phosphate-dependent aminotransferase family. HemL subfamily. In terms of assembly, homodimer. The cofactor is pyridoxal 5'-phosphate.

It localises to the cytoplasm. The enzyme catalyses (S)-4-amino-5-oxopentanoate = 5-aminolevulinate. Its pathway is porphyrin-containing compound metabolism; protoporphyrin-IX biosynthesis; 5-aminolevulinate from L-glutamyl-tRNA(Glu): step 2/2. This chain is Glutamate-1-semialdehyde 2,1-aminomutase 1, found in Staphylococcus aureus (strain Mu3 / ATCC 700698).